A 510-amino-acid chain; its full sequence is Inositol-3-phosphate synthase (510 aa).

NAD(+)-binding residues include G70, G71, N72, N73, D143, I180, Q190, R193, T230, A231, N232, T233, G281, S282, D306, S309, N340, N341, D342, K355, G393, D394, D422, and S423.

The protein belongs to the myo-inositol 1-phosphate synthase family. It depends on NAD(+) as a cofactor.

The protein localises to the cytoplasm. Its subcellular location is the cytosol. It is found in the nucleus. The catalysed reaction is D-glucose 6-phosphate = 1D-myo-inositol 3-phosphate. The protein operates within polyol metabolism; myo-inositol biosynthesis; myo-inositol from D-glucose 6-phosphate: step 1/2. Its function is as follows. Key enzyme in myo-inositol biosynthesis pathway that catalyzes the conversion of glucose 6-phosphate to 1-myo-inositol 1-phosphate in a NAD-dependent manner. This chain is Inositol-3-phosphate synthase, found in Nicotiana tabacum (Common tobacco).